A 197-amino-acid chain; its full sequence is MFGCLVAGRLVQTAAQQVAEDKFVFDLPDYENINHVVVFMLGTIPFPEGMGGSVYFSYPDSNGVPVWQLLGFVTNGKPSAIFKISGLKSGEGSQHPFGAMNIVRTPSVAQIGISVELLDSLAQQTPVGSAAVSSVDSFTQFTQKMLDNFYNFASSFALSQAQMTPNPSEMFIPANVVLKWYENFQRRLAQNPLFWKT.

The tract at residues 18–55 (VAEDKFVFDLPDYENINHVVVFMLGTIPFPEGMGGSVY) is required for F-X-F-G repeats-nucleoporins recognition and nuclear import. The flexible linker region involved in nuclear import of HSP70 proteins stretch occupies residues 124–134 (QTPVGSAAVSS).

This sequence belongs to the OPI10 family. In terms of assembly, forms an asymmetric homodimer; required for binding and nuclear import of HSP70 proteins. Interacts with ATP-bound HSP70 proteins. Interacts with NUP62 and NUP153 (via F-X-F-G repeats). Interacts with HSPA8. As to expression, expressed in the central white matter of newborn and adult brain, particularly in regions where oligodendrocytes are generated.

It localises to the cytoplasm. Its subcellular location is the cytosol. The protein localises to the nucleus. Acts as a specific nuclear import carrier for HSP70 proteins following heat-shock stress: acts by mediating the nucleoporin-dependent translocation of ATP-bound HSP70 proteins into the nucleus. HSP70 proteins import is required to protect cells from heat shock damages. Does not translocate ADP-bound HSP70 proteins into the nucleus. May also be indirectly required for organization and/or function of the secretory apparatus in Club cells in lung. This is Protein Hikeshi from Mus musculus (Mouse).